Reading from the N-terminus, the 247-residue chain is Protein McbF (247 aa).

Residues 6-234 enclose the ABC transporter domain; sequence LEINSLSFSY…NNETTQKRHL (229 aa). Position 40–47 (40–47) interacts with ATP; the sequence is GENPAGKT.

Belongs to the ABC transporter superfamily.

Functionally, together with two further proteins McbE and McbG this protein causes immunity to the peptide antibiotic microcin B17, which inhibits DNA replication in enterobacteriaceae. Immunity is determined by two different mechanisms. McbE is involved in the production of extracellular MccB17 and, in a complex with mcbf it also serves as 'pump' for the export of active MccB17 from the cytoplasm to the periplasmic space. The protein is Protein McbF (mcbF) of Escherichia coli.